Consider the following 176-residue polypeptide: DELTA-stichotoxin-She4a (176 aa).

The interval 2-11 is plays an important role in the hemolytic activity; it reads ELAGTIIDGA. The tract at residues 10–29 is N-terminal region; it reads GASLTFEVLDKVLGELGKVS. Phosphocholine is bound by residues serine 53, valine 86, serine 104, proline 106, tyrosine 132, tyrosine 136, and tyrosine 137. The segment at 104–119 is trp-rich region, which is important for the binding to lipid membrane; sequence SVPFDYNWYSNWWDVK. The Cell attachment site signature appears at 142–144; that stretch reads RGD.

In terms of assembly, octamer or nonamer in membranes. Monomer in the soluble state.

The protein resides in the secreted. It localises to the nematocyst. Its subcellular location is the target cell membrane. In terms of biological role, pore-forming protein that forms cations-selective hydrophilic pores of around 1 nm and causes cardiac stimulation and cytolysis. Pore formation is a multi-step process that involves specific recognition of membrane sphingomyelin (but neither cholesterol nor phosphatidylcholine) using aromatic rich region and adjacent phosphocholine (POC) binding site, firm binding to the membrane (mainly driven by hydrophobic interactions) accompanied by the transfer of the N-terminal region to the lipid-water interface and finally pore formation after oligomerization of monomers. Cytolytic effects include red blood cells hemolysis, platelet aggregation and lysis, cytotoxic and cytostatic effects on fibroblasts. Lethality in mammals has been ascribed to severe vasospasm of coronary vessels, cardiac arrhythmia, and inotropic effects. This chain is DELTA-stichotoxin-She4a, found in Stichodactyla helianthus (Sun anemone).